Consider the following 375-residue polypeptide: Alcohol dehydrogenase 1 (375 aa).

Ala1 carries the post-translational modification N-acetylalanine. Zn(2+)-binding residues include Cys46, His68, Cys98, Cys101, Cys104, Cys112, and Cys175. NAD(+) contacts are provided by residues 200-205, Asp224, Lys229, 293-295, and Arg370; these read GLGGVG and VGV.

Belongs to the zinc-containing alcohol dehydrogenase family. Class-I subfamily. Homodimer. Zn(2+) is required as a cofactor.

It is found in the cytoplasm. It carries out the reaction a primary alcohol + NAD(+) = an aldehyde + NADH + H(+). It catalyses the reaction a secondary alcohol + NAD(+) = a ketone + NADH + H(+). The polypeptide is Alcohol dehydrogenase 1 (Columba livia (Rock dove)).